We begin with the raw amino-acid sequence, 124 residues long: S-adenosylmethionine decarboxylase proenzyme (124 aa).

Residue Ser63 is the Schiff-base intermediate with substrate; via pyruvic acid of the active site. Ser63 is subject to Pyruvic acid (Ser); by autocatalysis. The active-site Proton acceptor; for processing activity is the His68. Cys83 acts as the Proton donor; for catalytic activity in catalysis.

The protein belongs to the prokaryotic AdoMetDC family. Type 1 subfamily. Heterotetramer of two alpha and two beta chains arranged as a dimer of alpha/beta heterodimers. The cofactor is pyruvate. Is synthesized initially as an inactive proenzyme. Formation of the active enzyme involves a self-maturation process in which the active site pyruvoyl group is generated from an internal serine residue via an autocatalytic post-translational modification. Two non-identical subunits are generated from the proenzyme in this reaction, and the pyruvate is formed at the N-terminus of the alpha chain, which is derived from the carboxyl end of the proenzyme. The post-translation cleavage follows an unusual pathway, termed non-hydrolytic serinolysis, in which the side chain hydroxyl group of the serine supplies its oxygen atom to form the C-terminus of the beta chain, while the remainder of the serine residue undergoes an oxidative deamination to produce ammonia and the pyruvoyl group blocking the N-terminus of the alpha chain.

The enzyme catalyses S-adenosyl-L-methionine + H(+) = S-adenosyl 3-(methylsulfanyl)propylamine + CO2. It functions in the pathway amine and polyamine biosynthesis; S-adenosylmethioninamine biosynthesis; S-adenosylmethioninamine from S-adenosyl-L-methionine: step 1/1. Functionally, catalyzes the decarboxylation of S-adenosylmethionine to S-adenosylmethioninamine (dcAdoMet), the propylamine donor required for the synthesis of the polyamines spermine and spermidine from the diamine putrescine. This Caldanaerobacter subterraneus subsp. tengcongensis (strain DSM 15242 / JCM 11007 / NBRC 100824 / MB4) (Thermoanaerobacter tengcongensis) protein is S-adenosylmethionine decarboxylase proenzyme.